We begin with the raw amino-acid sequence, 25 residues long: MRAKWRKKRTRRLKRKRRKVRARSK.

Residues 1–25 (MRAKWRKKRTRRLKRKRRKVRARSK) form a disordered region.

It belongs to the eukaryotic ribosomal protein eS32 family. In terms of assembly, component of the small ribosomal subunit (SSU). Mature yeast ribosomes consist of a small (40S) and a large (60S) subunit. The 40S small subunit contains 1 molecule of ribosomal RNA (18S rRNA) and 33 different proteins (encoded by 57 genes). The large 60S subunit contains 3 rRNA molecules (25S, 5.8S and 5S rRNA) and 46 different proteins (encoded by 81 genes).

It localises to the cytoplasm. In terms of biological role, component of the ribosome, a large ribonucleoprotein complex responsible for the synthesis of proteins in the cell. The small ribosomal subunit (SSU) binds messenger RNAs (mRNAs) and translates the encoded message by selecting cognate aminoacyl-transfer RNA (tRNA) molecules. The large subunit (LSU) contains the ribosomal catalytic site termed the peptidyl transferase center (PTC), which catalyzes the formation of peptide bonds, thereby polymerizing the amino acids delivered by tRNAs into a polypeptide chain. The nascent polypeptides leave the ribosome through a tunnel in the LSU and interact with protein factors that function in enzymatic processing, targeting, and the membrane insertion of nascent chains at the exit of the ribosomal tunnel. This Saccharomyces cerevisiae (strain ATCC 204508 / S288c) (Baker's yeast) protein is Small ribosomal subunit protein eS32B.